Consider the following 453-residue polypeptide: Pup--protein ligase (453 aa).

Glutamate 9 serves as a coordination point for Mg(2+). Arginine 53 is a binding site for ATP. Position 55 (tyrosine 55) interacts with Mg(2+). The active-site Proton acceptor is aspartate 57. A Mg(2+)-binding site is contributed by glutamate 63. The ATP site is built by threonine 66 and tryptophan 420.

Belongs to the Pup ligase/Pup deamidase family. Pup-conjugating enzyme subfamily.

It carries out the reaction ATP + [prokaryotic ubiquitin-like protein]-L-glutamate + [protein]-L-lysine = ADP + phosphate + N(6)-([prokaryotic ubiquitin-like protein]-gamma-L-glutamyl)-[protein]-L-lysine.. It participates in protein degradation; proteasomal Pup-dependent pathway. The protein operates within protein modification; protein pupylation. Its function is as follows. Catalyzes the covalent attachment of the prokaryotic ubiquitin-like protein modifier Pup to the proteasomal substrate proteins, thereby targeting them for proteasomal degradation. This tagging system is termed pupylation. The ligation reaction involves the side-chain carboxylate of the C-terminal glutamate of Pup and the side-chain amino group of a substrate lysine. The sequence is that of Pup--protein ligase from Kribbella flavida (strain DSM 17836 / JCM 10339 / NBRC 14399).